Here is a 244-residue protein sequence, read N- to C-terminus: Cyclin-Q (244 aa).

This sequence belongs to the cyclin family. Cyclin-like FAM58 subfamily.

Functionally, may be an activating cyclin for the cyclin-associated kinase CDK10. The sequence is that of Cyclin-Q (ccnq) from Xenopus laevis (African clawed frog).